An 883-amino-acid polypeptide reads, in one-letter code: Glutamate receptor 2 (883 aa).

An N-terminal signal peptide occupies residues 1–24; sequence MQKIMHISVLLSPVLWGLIFGVSS. Over 25-543 the chain is Extracellular; it reads NSIQIGGLFP…GVFSFLDPLA (519 aa). An intrachain disulfide couples C78 to C330. N256, N370, N406, and N413 each carry an N-linked (GlcNAc...) asparagine glycan. 3 residues coordinate L-glutamate: P499, T501, and R506. The chain crosses the membrane as a helical span at residues 544-564; sequence YEIWMCIVFAYIGVSVVLFLV. The Cytoplasmic segment spans residues 565-591; the sequence is SRFSPYEWHTEEFEDGRETQSSESTNE. The segment at residues 592 to 607 is an intramembrane region (helical; Pore-forming); it reads FGIFNSLWFSLGAFMQ. An intramembrane segment occupies 608-610; that stretch reads QGC. Residue C610 is the site of S-palmitoyl cysteine attachment. The Cytoplasmic segment spans residues 611 to 616; sequence DISPRS. Residues 617–637 traverse the membrane as a helical segment; that stretch reads LSGRIVGGVWWFFTLIIISSY. At 638 to 812 the chain is on the extracellular side; that stretch reads TANLAAFLTV…EKTSALSLSN (175 aa). S675 and T676 together coordinate L-glutamate. At S683 the chain carries Phosphoserine; by PKC. S717 carries the phosphoserine; by PKG modification. E726 provides a ligand contact to L-glutamate. A disulfide bridge links C739 with C794. A helical membrane pass occupies residues 813-833; the sequence is VAGVFYILVGGLGLAMLVALI. At 834–883 the chain is on the cytoplasmic side; it reads EFCYKSRAEAKRMKVAKNAQNINPSSSQNSQNFATYKEGYNVYGIESVKI. A lipid anchor (S-palmitoyl cysteine) is attached at C836. Phosphoserine occurs at positions 860 and 863. Positions 867-877 are required for interaction with IQSEC1; the sequence is ATYKEGYNVYG. At Y876 the chain carries Phosphotyrosine. Phosphoserine is present on S880.

It belongs to the glutamate-gated ion channel (TC 1.A.10.1) family. GRIA2 subfamily. Homotetramer or heterotetramer of pore-forming glutamate receptor subunits. Tetramers may be formed by the dimerization of dimers. May interact with MPP4. Forms a ternary complex with GRIP1 and CSPG4. Interacts with ATAD1 in an ATP-dependent manner. ATAD1-catalyzed ATP hydrolysis disrupts binding to ATAD1 and to GRIP1 and leads to AMPAR complex disassembly. Interacts with GRIP1 and GRIP2. Interacts with NSF via its C-terminus. Isoform 1, but not isoform 3, interacts with PICK1. Interacts with CACNG2. Interacts with GRIA1 and SYNDIG1. Part of a complex containing GRIA2, NSF and NAPA and/or NAPB. Interacts with SNX27 (via PDZ domain); the interaction is required for recycling to the plasma membrane when endocytosed and prevent degradation in lysosomes. Interacts with LRFN1. Found in a complex with GRIA1, GRIA3, GRIA4, CNIH2, CNIH3, CACNG2, CACNG3, CACNG4, CACNG5, CACNG7 and CACNG8. Interacts with CACNG5. Interacts with OLFM2. Interacts with AP4B1, AP4E1 and AP4M1; probably indirect it mediates the somatodendritic localization of GRIA2 in neurons. Forms a complex with GRIP1, NSG1 and STX12; controls the intracellular fate of AMPAR and the endosomal sorting of the GRIA2 subunit toward recycling and membrane targeting. Interacts with IQSEC1; the interaction is required for ARF6 activation. Interacts (heterotetramer form) with CNIH2 and CNIH3; this interaction promotes expression at the plasma membrane and extensively modulates their gating properties by slowing deactivation and desensitization kinetics. Palmitoylated. Depalmitoylated upon L-glutamate stimulation. Cys-610 palmitoylation leads to Golgi retention and decreased cell surface expression. In contrast, Cys-836 palmitoylation does not affect cell surface expression but regulates stimulation-dependent endocytosis. In terms of processing, ubiquitinated by RNF167, leading to its degradation. Post-translationally, phosphorylation at Tyr-876 is required for interaction with IQSEC1 and ARF6 activation, which in turn triggers AMPAR internalization for persistent synaptic depression. N-glycosylated.

The protein localises to the cell membrane. It is found in the postsynaptic cell membrane. It localises to the postsynaptic density membrane. It catalyses the reaction Ca(2+)(in) = Ca(2+)(out). It carries out the reaction Na(+)(in) = Na(+)(out). Functionally, ionotropic glutamate receptor that functions as a ligand-gated cation channel, gated by L-glutamate and glutamatergic agonists such as alpha-amino-3-hydroxy-5-methyl-4-isoxazolepropionic acid (AMPA), quisqualic acid, and kainic acid. L-glutamate acts as an excitatory neurotransmitter at many synapses in the central nervous system and plays an important role in fast excitatory synaptic transmission. Binding of the excitatory neurotransmitter L-glutamate induces a conformation change, leading to the opening of the cation channel, and thereby converts the chemical signal to an electrical impulse upon entry of monovalent and divalent cations such as sodium and calcium. The receptor then desensitizes rapidly and enters in a transient inactive state, characterized by the presence of bound agonist. In the presence of CACNG4 or CACNG7 or CACNG8, shows resensitization which is characterized by a delayed accumulation of current flux upon continued application of L-glutamate. Through complex formation with NSG1, GRIP1 and STX12 controls the intracellular fate of AMPAR and the endosomal sorting of the GRIA2 subunit toward recycling and membrane targeting. In Homo sapiens (Human), this protein is Glutamate receptor 2.